The chain runs to 276 residues: Biotin synthase (276 aa).

A Radical SAM core domain is found at 1 to 226 (MKKIYLCAIS…EAIIMLAGGR (226 aa)). Residues Cys17, Cys21, and Cys24 each contribute to the [4Fe-4S] cluster site. The [2Fe-2S] cluster site is built by Cys61, Cys95, and Cys153.

It belongs to the radical SAM superfamily. Biotin synthase family. In terms of assembly, homodimer. The cofactor is [4Fe-4S] cluster. [2Fe-2S] cluster serves as cofactor.

It carries out the reaction (4R,5S)-dethiobiotin + (sulfur carrier)-SH + 2 reduced [2Fe-2S]-[ferredoxin] + 2 S-adenosyl-L-methionine = (sulfur carrier)-H + biotin + 2 5'-deoxyadenosine + 2 L-methionine + 2 oxidized [2Fe-2S]-[ferredoxin]. Its pathway is cofactor biosynthesis; biotin biosynthesis; biotin from 7,8-diaminononanoate: step 2/2. Functionally, catalyzes the conversion of dethiobiotin (DTB) to biotin by the insertion of a sulfur atom into dethiobiotin via a radical-based mechanism. This is Biotin synthase from Nautilia profundicola (strain ATCC BAA-1463 / DSM 18972 / AmH).